The sequence spans 319 residues: Lipoyl synthase (319 aa).

The disordered stretch occupies residues 1-28 (MVVLVDTVSSTPVRPRHPEKAARPDALS). A compositionally biased stretch (basic and acidic residues) spans 16–28 (RHPEKAARPDALS). Residues C61, C66, C72, C87, C91, C94, and S300 each contribute to the [4Fe-4S] cluster site. The region spanning 73-289 (WDKKHATFMI…AKTAYAKGFL (217 aa)) is the Radical SAM core domain.

This sequence belongs to the radical SAM superfamily. Lipoyl synthase family. [4Fe-4S] cluster serves as cofactor.

It localises to the cytoplasm. It catalyses the reaction [[Fe-S] cluster scaffold protein carrying a second [4Fe-4S](2+) cluster] + N(6)-octanoyl-L-lysyl-[protein] + 2 oxidized [2Fe-2S]-[ferredoxin] + 2 S-adenosyl-L-methionine + 4 H(+) = [[Fe-S] cluster scaffold protein] + N(6)-[(R)-dihydrolipoyl]-L-lysyl-[protein] + 4 Fe(3+) + 2 hydrogen sulfide + 2 5'-deoxyadenosine + 2 L-methionine + 2 reduced [2Fe-2S]-[ferredoxin]. Its pathway is protein modification; protein lipoylation via endogenous pathway; protein N(6)-(lipoyl)lysine from octanoyl-[acyl-carrier-protein]: step 2/2. Its function is as follows. Catalyzes the radical-mediated insertion of two sulfur atoms into the C-6 and C-8 positions of the octanoyl moiety bound to the lipoyl domains of lipoate-dependent enzymes, thereby converting the octanoylated domains into lipoylated derivatives. This Rhodopseudomonas palustris (strain HaA2) protein is Lipoyl synthase.